We begin with the raw amino-acid sequence, 254 residues long: Vesicle transport protein USE1 (254 aa).

The Cytoplasmic portion of the chain corresponds to 1–228; that stretch reads MAYISENELK…AYKCGYDCFK (228 aa). The helical; Anchor for type IV membrane protein transmembrane segment at 229–249 threads the bilayer; that stretch reads VMLIVLIFMSFVSMVLMMKIF. At 250–254 the chain is on the lumenal side; that stretch reads KKAST.

This sequence belongs to the USE1 family.

It is found in the endoplasmic reticulum membrane. Functionally, SNARE that may be involved in targeting and fusion of Golgi-derived retrograde transport vesicles with the ER. The polypeptide is Vesicle transport protein USE1 (Caenorhabditis elegans).